The following is a 339-amino-acid chain: Coproporphyrin III ferrochelatase (339 aa).

Positions 52 and 121 each coordinate Fe-coproporphyrin III. Residues His181 and Glu264 each coordinate Fe(2+).

The protein belongs to the ferrochelatase family.

Its subcellular location is the cytoplasm. The catalysed reaction is Fe-coproporphyrin III + 2 H(+) = coproporphyrin III + Fe(2+). It functions in the pathway porphyrin-containing compound metabolism; protoheme biosynthesis. Its function is as follows. Involved in coproporphyrin-dependent heme b biosynthesis. Catalyzes the insertion of ferrous iron into coproporphyrin III to form Fe-coproporphyrin III. The polypeptide is Coproporphyrin III ferrochelatase (Mycolicibacterium vanbaalenii (strain DSM 7251 / JCM 13017 / BCRC 16820 / KCTC 9966 / NRRL B-24157 / PYR-1) (Mycobacterium vanbaalenii)).